Here is a 119-residue protein sequence, read N- to C-terminus: Acidic phospholipase A2 2 (119 aa).

Cystine bridges form between Cys-11–Cys-71, Cys-26–Cys-118, Cys-28–Cys-44, Cys-43–Cys-99, Cys-50–Cys-92, Cys-60–Cys-85, and Cys-78–Cys-90. Ca(2+) contacts are provided by Tyr-27, Gly-29, and Gly-31. His-47 is a catalytic residue. Residue Asp-48 coordinates Ca(2+). Asp-93 is a catalytic residue.

Belongs to the phospholipase A2 family. Group I subfamily. D49 sub-subfamily. Homotrimer. Requires Ca(2+) as cofactor. Expressed by the venom gland.

Its subcellular location is the secreted. The catalysed reaction is a 1,2-diacyl-sn-glycero-3-phosphocholine + H2O = a 1-acyl-sn-glycero-3-phosphocholine + a fatty acid + H(+). In terms of biological role, PLA2 catalyzes the calcium-dependent hydrolysis of the 2-acyl groups in 3-sn-phosphoglycerides. This is Acidic phospholipase A2 2 from Naja naja (Indian cobra).